Consider the following 217-residue polypeptide: Adenylate kinase (217 aa).

10 to 15 (GAGKGT) contacts ATP. The segment at 30-59 (STGEILRAAVKSKTPMGVKAKEYMDQGALV) is NMP. AMP is bound by residues Thr-31, Arg-36, 57 to 59 (ALV), 85 to 88 (GFPR), and Gln-92. Positions 126–163 (GRRVCRACGRAFHVKFDPPLVDGVCDACGGELYQRDDD) are LID. ATP is bound at residue Arg-127. Zn(2+) is bound by residues Cys-130, Cys-133, Cys-150, and Cys-153. AMP-binding residues include Arg-160 and Arg-171. Glu-199 contributes to the ATP binding site.

The protein belongs to the adenylate kinase family. In terms of assembly, monomer.

It is found in the cytoplasm. The catalysed reaction is AMP + ATP = 2 ADP. It participates in purine metabolism; AMP biosynthesis via salvage pathway; AMP from ADP: step 1/1. In terms of biological role, catalyzes the reversible transfer of the terminal phosphate group between ATP and AMP. Plays an important role in cellular energy homeostasis and in adenine nucleotide metabolism. In Geobacter sulfurreducens (strain ATCC 51573 / DSM 12127 / PCA), this protein is Adenylate kinase.